The chain runs to 288 residues: Diaminopimelate epimerase (288 aa).

Positions 13, 46, and 66 each coordinate substrate. The active-site Proton donor is Cys-75. Residues 76–77 (GN), Asn-166, Asn-199, and 217–218 (ER) each bind substrate. Residue Cys-226 is the Proton acceptor of the active site. Substrate is bound at residue 227–228 (GT).

It belongs to the diaminopimelate epimerase family. Homodimer.

The protein localises to the cytoplasm. The enzyme catalyses (2S,6S)-2,6-diaminopimelate = meso-2,6-diaminopimelate. Its pathway is amino-acid biosynthesis; L-lysine biosynthesis via DAP pathway; DL-2,6-diaminopimelate from LL-2,6-diaminopimelate: step 1/1. In terms of biological role, catalyzes the stereoinversion of LL-2,6-diaminopimelate (L,L-DAP) to meso-diaminopimelate (meso-DAP), a precursor of L-lysine and an essential component of the bacterial peptidoglycan. The polypeptide is Diaminopimelate epimerase (Cupriavidus pinatubonensis (strain JMP 134 / LMG 1197) (Cupriavidus necator (strain JMP 134))).